The primary structure comprises 530 residues: Bifunctional purine biosynthesis protein PurH (530 aa).

The 148-residue stretch at Met1–Val148 folds into the MGS-like domain.

It belongs to the PurH family.

The catalysed reaction is (6R)-10-formyltetrahydrofolate + 5-amino-1-(5-phospho-beta-D-ribosyl)imidazole-4-carboxamide = 5-formamido-1-(5-phospho-D-ribosyl)imidazole-4-carboxamide + (6S)-5,6,7,8-tetrahydrofolate. The enzyme catalyses IMP + H2O = 5-formamido-1-(5-phospho-D-ribosyl)imidazole-4-carboxamide. Its pathway is purine metabolism; IMP biosynthesis via de novo pathway; 5-formamido-1-(5-phospho-D-ribosyl)imidazole-4-carboxamide from 5-amino-1-(5-phospho-D-ribosyl)imidazole-4-carboxamide (10-formyl THF route): step 1/1. The protein operates within purine metabolism; IMP biosynthesis via de novo pathway; IMP from 5-formamido-1-(5-phospho-D-ribosyl)imidazole-4-carboxamide: step 1/1. In Vibrio campbellii (strain ATCC BAA-1116), this protein is Bifunctional purine biosynthesis protein PurH.